Here is a 470-residue protein sequence, read N- to C-terminus: Properdin (470 aa).

Positions 1-26 are cleaved as a signal peptide; that stretch reads MTAPVQVPQSLLLLLMLLLTLPATGS. TSP type-1 domains lie at 27-75, 76-133, 135-190, 192-254, 256-312, 314-376, and 380-463; these read DPVL…QACR, SPRW…QCCP, MGGW…QVCP, HGAW…PPCP, AGGW…VPCP, DGEW…QNCI, and KGSW…PACK. 3 cysteine pairs are disulfide-bonded: Cys-31/Cys-55, Cys-42/Cys-71, and Cys-56/Cys-74. C-linked (Man) tryptophan glycans are attached at residues Trp-82 and Trp-85. Intrachain disulfides connect Cys-88-Cys-126, Cys-92-Cys-132, Cys-103-Cys-110, Cys-131-Cys-169, Cys-147-Cys-183, Cys-151-Cys-189, and Cys-162-Cys-173. Trp-138, Trp-141, and Trp-144 each carry a C-linked (Man) tryptophan glycan. The O-linked (Fuc...) threonine glycan is linked to Thr-150. C-linked (Man) tryptophan glycosylation is found at Trp-195, Trp-198, and Trp-201. Cystine bridges form between Cys-204–Cys-247, Cys-208–Cys-253, and Cys-223–Cys-237. Ser-207 is a glycosylation site (O-linked (Fuc...) serine). Residues Trp-259 and Trp-262 are each glycosylated (C-linked (Man) tryptophan). Intrachain disulfides connect Cys-268-Cys-305, Cys-272-Cys-311, and Cys-283-Cys-295. O-linked (Fuc...) threonine glycosylation is present at Thr-271. C-linked (Man) tryptophan glycans are attached at residues Trp-320 and Trp-323. 3 disulfides stabilise this stretch: Cys-326–Cys-369, Cys-336–Cys-375, and Cys-349–Cys-359. Residues 350–358 are interaction with Complement C3 beta chain; sequence KGRKFNGQR. Trp-383, Trp-386, and Trp-389 each carry a C-linked (Man) tryptophan glycan. 3 cysteine pairs are disulfide-bonded: Cys-392-Cys-456, Cys-396-Cys-462, and Cys-408-Cys-440. Asn-429 is a glycosylation site (N-linked (GlcNAc...) asparagine).

As to quaternary structure, in plasma, properdin exists as dimers, trimers or tetramers in the relative proportions of 26:54:20. Interacts with the pro-C3-convertase enzyme complex (C3b-Bb) comprised of Complement C3 beta chain (C3b) and the Complement factor B Bb fragment (Bb), where it binds (via its TSP type-1 5 domain) with C3b and Bb. This interaction stabilizes the complex and allows it to become the active C3-convertase enzyme complex (C3b-Bb-FP). Interacts with C3b. Interacts with CFB.

The protein resides in the secreted. Its function is as follows. A positive regulator of the alternate pathway of complement. It binds to and stabilizes the C3- and C5-convertase enzyme complexes. Inhibits CFI-CFH mediated degradation of Inhibits CFI-CFH mediated degradation of Complement C3 beta chain (C3b). This is Properdin (CFP) from Cavia porcellus (Guinea pig).